Reading from the N-terminus, the 239-residue chain is Ubiquinone biosynthesis O-methyltransferase (239 aa).

Positions 44, 63, 84, and 128 each coordinate S-adenosyl-L-methionine.

This sequence belongs to the methyltransferase superfamily. UbiG/COQ3 family.

The catalysed reaction is a 3-demethylubiquinol + S-adenosyl-L-methionine = a ubiquinol + S-adenosyl-L-homocysteine + H(+). The enzyme catalyses a 3-(all-trans-polyprenyl)benzene-1,2-diol + S-adenosyl-L-methionine = a 2-methoxy-6-(all-trans-polyprenyl)phenol + S-adenosyl-L-homocysteine + H(+). Its pathway is cofactor biosynthesis; ubiquinone biosynthesis. In terms of biological role, O-methyltransferase that catalyzes the 2 O-methylation steps in the ubiquinone biosynthetic pathway. In Xanthomonas campestris pv. campestris (strain 8004), this protein is Ubiquinone biosynthesis O-methyltransferase.